We begin with the raw amino-acid sequence, 526 residues long: Peptide chain release factor 3 (526 aa).

In terms of domain architecture, tr-type G spans 8 to 277 (GKRRTFAIIS…GLTDWAPAPQ (270 aa)). Residues 17–24 (SHPDAGKT), 85–89 (DTPGH), and 139–142 (NKLD) contribute to the GTP site.

Belongs to the TRAFAC class translation factor GTPase superfamily. Classic translation factor GTPase family. PrfC subfamily.

The protein localises to the cytoplasm. Increases the formation of ribosomal termination complexes and stimulates activities of RF-1 and RF-2. It binds guanine nucleotides and has strong preference for UGA stop codons. It may interact directly with the ribosome. The stimulation of RF-1 and RF-2 is significantly reduced by GTP and GDP, but not by GMP. The chain is Peptide chain release factor 3 from Aliivibrio fischeri (strain ATCC 700601 / ES114) (Vibrio fischeri).